The primary structure comprises 1390 residues: DNA-directed RNA polymerase III subunit RPC1 (1390 aa).

Zn(2+)-binding residues include Cys-69, Cys-72, Cys-79, His-82, Cys-109, and Cys-112. Lys-144 is a binding site for DNA. Residues Cys-156 and Cys-159 each coordinate Zn(2+). Residues Lys-167, Ser-326, Lys-348, Arg-353, Arg-360, and Arg-366 each coordinate DNA. Lys-445 bears the N6-acetyllysine mark. RNA is bound at residue Arg-464. Mg(2+)-binding residues include Asp-499, Asp-501, and Asp-503. Asp-503 is a binding site for RNA. Residues 844–856 are bridging helix; that stretch reads PTEFFFHTMAGRE. Residues Arg-1159, Arg-1305, and Lys-1323 each contribute to the DNA site.

It belongs to the RNA polymerase beta' chain family. In terms of assembly, component of the RNA polymerase III (Pol III) complex consisting of 17 subunits: a ten-subunit catalytic core composed of POLR3A/RPC1, POLR3B/RPC2, POLR1C/RPAC1, POLR1D/RPAC2, POLR3K/RPC10, POLR2E/RPABC1, POLR2F/RPABC2, POLR2H/RPABC3, POLR2K/RPABC4 and POLR2L/RPABC5; a mobile stalk composed of two subunits POLR3H/RPC8 and CRCP/RPC9, protruding from the core and functioning primarily in transcription initiation; and additional subunits homologous to general transcription factors of the RNA polymerase II machinery, POLR3C/RPC3-POLR3F/RPC6-POLR3G/RPC7 heterotrimer required for transcription initiation and POLR3D/RPC4-POLR3E/RPC5 heterodimer involved in both transcription initiation and termination. As part of the RNA polymerase III complex, interacts with PKP2. It depends on Mg(2+) as a cofactor.

It localises to the nucleus. The protein localises to the cytoplasm. The protein resides in the cytosol. It catalyses the reaction RNA(n) + a ribonucleoside 5'-triphosphate = RNA(n+1) + diphosphate. Functionally, catalytic core component of RNA polymerase III (Pol III), a DNA-dependent RNA polymerase which synthesizes small non-coding RNAs using the four ribonucleoside triphosphates as substrates. Synthesizes 5S rRNA, snRNAs, tRNAs and miRNAs from at least 500 distinct genomic loci. Pol III-mediated transcription cycle proceeds through transcription initiation, transcription elongation and transcription termination stages. During transcription initiation, Pol III is recruited to DNA promoters type I, II or III with the help of general transcription factors and other specific initiation factors. Once the polymerase has escaped from the promoter it enters the elongation phase during which RNA is actively polymerized, based on complementarity with the template DNA strand. Transcription termination involves the release of the RNA transcript and polymerase from the DNA. Forms Pol III active center together with the second largest subunit POLR3B/RPC2. Appends one nucleotide at a time to the 3' end of the nascent RNA, with POLR3A/RPC1 contributing a Mg(2+)-coordinating DxDGD motif, and POLR3B/RPC2 participating in the coordination of a second Mg(2+) ion and providing lysine residues believed to facilitate Watson-Crick base pairing between the incoming nucleotide and template base. Typically, Mg(2+) ions direct a 5' nucleoside triphosphate to form a phosphodiester bond with the 3' hydroxyl of the preceding nucleotide of the nascent RNA, with the elimination of pyrophosphate. Pol III plays a key role in sensing and limiting infection by intracellular bacteria and DNA viruses. Acts as a nuclear and cytosolic DNA sensor involved in innate immune response. Can sense non-self dsDNA that serves as template for transcription into dsRNA. The non-self RNA polymerase III transcripts, such as Epstein-Barr virus-encoded RNAs (EBERs) induce type I interferon and NF-kappa-B through the RIG-I pathway. This chain is DNA-directed RNA polymerase III subunit RPC1, found in Bos taurus (Bovine).